A 332-amino-acid chain; its full sequence is MSTVKEQLIENLIEEDEVSQSKITIVGTGAVGMACAICILLKDLADELALVDVAVDKLKGETMDLQHGSLFFNTSKIVSGKDYSVSANSKIVIVTAGARQQEGESRLALVQRNVNIMKSIIPTIVQHSPDCKMLIVSNPVDILTYVAWKLSGLPATRVIGSGCNLDSARFRYLIGKKLGVHPTSCHGWIIGEHGDSSVPLWSGVNVAGVALKTLDPKLGTDSDKDQWKNIHKQVIGSAYEIIKLKGYTSWAIGLSVTDLVGSILKNLRRVHPVSTMVKGLYGIKEEIFLSIPCVLGRNGVSDIVKVNLNAEEEALFKKSANTLWNVQKDLTF.

Residues 29–57 (GAVG…AVDK) and Arg99 contribute to the NAD(+) site. 3 residues coordinate substrate: Arg106, Asn138, and Arg169. An NAD(+)-binding site is contributed by Asn138. Residue His193 is the Proton acceptor of the active site. Thr248 provides a ligand contact to substrate. Ser301 carries the phosphoserine modification.

The protein belongs to the LDH/MDH superfamily. LDH family. Homotetramer. Interacts with RABL2/RABL2A; binds preferentially to GTP-bound RABL2.

The protein localises to the cytoplasm. The enzyme catalyses (S)-lactate + NAD(+) = pyruvate + NADH + H(+). Its pathway is fermentation; pyruvate fermentation to lactate; (S)-lactate from pyruvate: step 1/1. Possible role in sperm motility. This is L-lactate dehydrogenase C chain (LDHC) from Sus scrofa (Pig).